The sequence spans 277 residues: Caspase-3 (277 aa).

Residue Met-1 is modified to N-acetylmethionine. Propeptides lie at residues 1–9 (MENNETSVD) and 10–28 (SKSI…KSMD). Lys-11 carries the post-translational modification N6-acetyllysine. The residue at position 26 (Ser-26) is a Phosphoserine. Catalysis depends on residues His-121 and Cys-163. Cys-163 bears the S-nitrosocysteine; in inhibited form mark.

This sequence belongs to the peptidase C14A family. In terms of assembly, heterotetramer that consists of two anti-parallel arranged heterodimers, each one formed by a 17 kDa (p17) and a 12 kDa (p12) subunit. Interacts with BIRC6/bruce. Post-translationally, cleavage by granzyme B, caspase-6, caspase-8 and caspase-10 generates the two active subunits. Additional processing of the propeptides is likely due to the autocatalytic activity of the activated protease. Active heterodimers between the small subunit of caspase-7 protease and the large subunit of caspase-3 also occur and vice versa. S-nitrosylated on its catalytic site cysteine in unstimulated cell lines and denitrosylated upon activation of the Fas apoptotic pathway, associated with an increase in intracellular caspase activity. Fas therefore activates caspase-3 not only by inducing the cleavage of the caspase zymogen to its active subunits, but also by stimulating the denitrosylation of its active site thiol. In terms of processing, ubiquitinated by BIRC6; this activity is inhibited by DIABLO/SMAC.

The protein localises to the cytoplasm. The enzyme catalyses Strict requirement for an Asp residue at positions P1 and P4. It has a preferred cleavage sequence of Asp-Xaa-Xaa-Asp-|- with a hydrophobic amino-acid residue at P2 and a hydrophilic amino-acid residue at P3, although Val or Ala are also accepted at this position.. Its activity is regulated as follows. Inhibited by BIRC6; following inhibition of BIRC6-caspase binding by DIABLO/SMAC, BIRC6 is subjected to caspase cleavage, leading to an increase in active caspases. Functionally, involved in the activation cascade of caspases responsible for apoptosis execution. At the onset of apoptosis, it proteolytically cleaves poly(ADP-ribose) polymerase PARP1 at a '216-Asp-|-Gly-217' bond. Cleaves and activates sterol regulatory element binding proteins (SREBPs) between the basic helix-loop-helix leucine zipper domain and the membrane attachment domain. Cleaves and activates caspase-6, -7 and -9 (CASP6, CASP7 and CASP9, respectively). Cleaves and inactivates interleukin-18 (IL18). Triggers cell adhesion in sympathetic neurons through RET cleavage. Cleaves IL-1 beta between an Asp and an Ala, releasing the mature cytokine which is involved in a variety of inflammatory processes. Cleaves and inhibits serine/threonine-protein kinase AKT1 in response to oxidative stress. Acts as an inhibitor of type I interferon production during virus-induced apoptosis by mediating cleavage of antiviral proteins CGAS, IRF3 and MAVS, thereby preventing cytokine overproduction. Also involved in pyroptosis by mediating cleavage and activation of gasdermin-E (GSDME). Cleaves XRCC4 and phospholipid scramblase proteins XKR4, XKR8 and XKR9, leading to promote phosphatidylserine exposure on apoptotic cell surface. Cleaves BIRC6 following inhibition of BIRC6-caspase binding by DIABLO/SMAC. The sequence is that of Caspase-3 (CASP3) from Mesocricetus auratus (Golden hamster).